A 469-amino-acid chain; its full sequence is uncharacterized protein (469 aa).

A coiled-coil region spans residues 11 to 65; the sequence is LFISVAFSQESVEDLKRLLEEYKKKIQEIERRLEELEKAKKEEEKKKEAVALKPT.

This is an uncharacterized protein from Aquifex aeolicus (strain VF5).